A 222-amino-acid polypeptide reads, in one-letter code: Cytidylate kinase (222 aa).

ATP is bound at residue 10–18 (GPAGSGKSS).

This sequence belongs to the cytidylate kinase family. Type 1 subfamily.

Its subcellular location is the cytoplasm. It catalyses the reaction CMP + ATP = CDP + ADP. The catalysed reaction is dCMP + ATP = dCDP + ADP. This chain is Cytidylate kinase, found in Acholeplasma laidlawii (strain PG-8A).